Consider the following 1393-residue polypeptide: ABC transporter G family member 3 (1393 aa).

The segment covering Met1–Pro14 has biased composition (basic and acidic residues). Residues Met1–Ser68 form a disordered region. A compositionally biased stretch (low complexity) spans Asp15 to Asn50. Residues Val100 to Leu353 form the ABC transporter 1 domain. Gly144–Ser151 is a binding site for ATP. The 226-residue stretch at Met473–Asn698 folds into the ABC transmembrane type-2 1 domain. 7 helical membrane-spanning segments follow: residues Phe479 to Thr499, Leu509 to Phe529, Ile558 to Phe578, Phe585 to Val605, Leu615 to Ile635, Ile640 to Val660, and Val724 to Val744. The 253-residue stretch at Met783–Tyr1035 folds into the ABC transporter 2 domain. An ATP-binding site is contributed by Gly828 to Ser835. Residues Gln1121–Ile1388 enclose the ABC transmembrane type-2 2 domain. Helical transmembrane passes span Thr1122–Leu1142, Leu1157–Val1177, Leu1206–Leu1226, Phe1235–Leu1255, Ile1265–Ile1285, and Phe1364–Ala1384.

The protein belongs to the ABC transporter superfamily. ABCG family. PDR (TC 3.A.1.205) subfamily.

The protein localises to the membrane. This is ABC transporter G family member 3 (abcG3) from Dictyostelium discoideum (Social amoeba).